The sequence spans 49 residues: MRQTITLACAETGERLYLTSKNKRNTPEKLQLKKYSPKLRRRALFTEVK.

This sequence belongs to the bacterial ribosomal protein bL33 family.

In Enterococcus faecalis (strain ATCC 700802 / V583), this protein is Large ribosomal subunit protein bL33D (rpmG4).